The sequence spans 44 residues: MRDLKTYLSVAPVVSTLWFGALAGLLIEINRFFPDALIFPFFSF.

A helical transmembrane segment spans residues 7-27; that stretch reads YLSVAPVVSTLWFGALAGLLI.

This sequence belongs to the PsaJ family.

It is found in the plastid. Its subcellular location is the chloroplast thylakoid membrane. Functionally, may help in the organization of the PsaE and PsaF subunits. This is Photosystem I reaction center subunit IX from Glycine max (Soybean).